The following is a 440-amino-acid chain: L-seryl-tRNA(Sec) selenium transferase (440 aa).

N6-(pyridoxal phosphate)lysine is present on Lys-282.

The protein belongs to the SelA family. Requires pyridoxal 5'-phosphate as cofactor.

It localises to the cytoplasm. The catalysed reaction is L-seryl-tRNA(Sec) + selenophosphate + H(+) = L-selenocysteinyl-tRNA(Sec) + phosphate. It participates in aminoacyl-tRNA biosynthesis; selenocysteinyl-tRNA(Sec) biosynthesis; selenocysteinyl-tRNA(Sec) from L-seryl-tRNA(Sec) (bacterial route): step 1/1. In terms of biological role, converts seryl-tRNA(Sec) to selenocysteinyl-tRNA(Sec) required for selenoprotein biosynthesis. This Campylobacter jejuni subsp. jejuni serotype O:2 (strain ATCC 700819 / NCTC 11168) protein is L-seryl-tRNA(Sec) selenium transferase.